A 237-amino-acid polypeptide reads, in one-letter code: DNA repair protein RecO (237 aa).

This sequence belongs to the RecO family.

Functionally, involved in DNA repair and RecF pathway recombination. The chain is DNA repair protein RecO from Rickettsia felis (strain ATCC VR-1525 / URRWXCal2) (Rickettsia azadi).